Consider the following 320-residue polypeptide: ATP-dependent 6-phosphofructokinase (320 aa).

ATP is bound at residue glycine 11. 21–25 is an ADP binding site; sequence RAVVR. Residues 72–73 and 102–105 contribute to the ATP site; these read RC and GDGS. Mg(2+) is bound at residue aspartate 103. 125-127 is a binding site for substrate; it reads TID. Catalysis depends on aspartate 127, which acts as the Proton acceptor. Arginine 154 contacts ADP. Residues arginine 162 and 169-171 contribute to the substrate site; that span reads MGR. ADP-binding positions include 185–187 and 214–216; these read GAE and KTH. Residues glutamate 223, arginine 244, and 250–253 contribute to the substrate site; that span reads HIQR.

This sequence belongs to the phosphofructokinase type A (PFKA) family. ATP-dependent PFK group I subfamily. Prokaryotic clade 'B1' sub-subfamily. As to quaternary structure, homotetramer. Mg(2+) is required as a cofactor.

Its subcellular location is the cytoplasm. It catalyses the reaction beta-D-fructose 6-phosphate + ATP = beta-D-fructose 1,6-bisphosphate + ADP + H(+). The protein operates within carbohydrate degradation; glycolysis; D-glyceraldehyde 3-phosphate and glycerone phosphate from D-glucose: step 3/4. Allosterically activated by ADP and other diphosphonucleosides, and allosterically inhibited by phosphoenolpyruvate. Its function is as follows. Catalyzes the phosphorylation of D-fructose 6-phosphate to fructose 1,6-bisphosphate by ATP, the first committing step of glycolysis. This Clostridium botulinum (strain Alaska E43 / Type E3) protein is ATP-dependent 6-phosphofructokinase.